A 216-amino-acid chain; its full sequence is Thiamine-phosphate synthase (216 aa).

Residues 37–41 (QVRSK) and Asp68 each bind 4-amino-2-methyl-5-(diphosphooxymethyl)pyrimidine. Positions 69 and 93 each coordinate Mg(2+). Thr112 contacts 4-amino-2-methyl-5-(diphosphooxymethyl)pyrimidine. 140-142 (TPT) is a 2-[(2R,5Z)-2-carboxy-4-methylthiazol-5(2H)-ylidene]ethyl phosphate binding site. Residue Lys143 coordinates 4-amino-2-methyl-5-(diphosphooxymethyl)pyrimidine.

Belongs to the thiamine-phosphate synthase family. The cofactor is Mg(2+).

The enzyme catalyses 2-[(2R,5Z)-2-carboxy-4-methylthiazol-5(2H)-ylidene]ethyl phosphate + 4-amino-2-methyl-5-(diphosphooxymethyl)pyrimidine + 2 H(+) = thiamine phosphate + CO2 + diphosphate. It carries out the reaction 2-(2-carboxy-4-methylthiazol-5-yl)ethyl phosphate + 4-amino-2-methyl-5-(diphosphooxymethyl)pyrimidine + 2 H(+) = thiamine phosphate + CO2 + diphosphate. The catalysed reaction is 4-methyl-5-(2-phosphooxyethyl)-thiazole + 4-amino-2-methyl-5-(diphosphooxymethyl)pyrimidine + H(+) = thiamine phosphate + diphosphate. The protein operates within cofactor biosynthesis; thiamine diphosphate biosynthesis; thiamine phosphate from 4-amino-2-methyl-5-diphosphomethylpyrimidine and 4-methyl-5-(2-phosphoethyl)-thiazole: step 1/1. Its function is as follows. Condenses 4-methyl-5-(beta-hydroxyethyl)thiazole monophosphate (THZ-P) and 2-methyl-4-amino-5-hydroxymethyl pyrimidine pyrophosphate (HMP-PP) to form thiamine monophosphate (TMP). This chain is Thiamine-phosphate synthase, found in Corynebacterium efficiens (strain DSM 44549 / YS-314 / AJ 12310 / JCM 11189 / NBRC 100395).